A 371-amino-acid chain; its full sequence is UDP-N-acetylglucosamine--N-acetylmuramyl-(pentapeptide) pyrophosphoryl-undecaprenol N-acetylglucosamine transferase (371 aa).

UDP-N-acetyl-alpha-D-glucosamine is bound by residues 15–17 (TGG), asparagine 126, arginine 172, serine 199, isoleucine 256, 275–280 (ALTVSE), and glutamine 301.

This sequence belongs to the glycosyltransferase 28 family. MurG subfamily.

It is found in the cell inner membrane. It catalyses the reaction di-trans,octa-cis-undecaprenyl diphospho-N-acetyl-alpha-D-muramoyl-L-alanyl-D-glutamyl-meso-2,6-diaminopimeloyl-D-alanyl-D-alanine + UDP-N-acetyl-alpha-D-glucosamine = di-trans,octa-cis-undecaprenyl diphospho-[N-acetyl-alpha-D-glucosaminyl-(1-&gt;4)]-N-acetyl-alpha-D-muramoyl-L-alanyl-D-glutamyl-meso-2,6-diaminopimeloyl-D-alanyl-D-alanine + UDP + H(+). It functions in the pathway cell wall biogenesis; peptidoglycan biosynthesis. Its function is as follows. Cell wall formation. Catalyzes the transfer of a GlcNAc subunit on undecaprenyl-pyrophosphoryl-MurNAc-pentapeptide (lipid intermediate I) to form undecaprenyl-pyrophosphoryl-MurNAc-(pentapeptide)GlcNAc (lipid intermediate II). The chain is UDP-N-acetylglucosamine--N-acetylmuramyl-(pentapeptide) pyrophosphoryl-undecaprenol N-acetylglucosamine transferase from Francisella tularensis subsp. tularensis (strain FSC 198).